The sequence spans 337 residues: Peroxidase 14 (337 aa).

An N-terminal signal peptide occupies residues 1 to 22; sequence MARIGSFLILLSLTYALTLCIC. N-linked (GlcNAc...) asparagine glycosylation occurs at N24. Cystine bridges form between C44–C124, C77–C82, C130–C331, and C209–C241. Catalysis depends on H75, which acts as the Proton acceptor. Ca(2+) contacts are provided by D76, V79, G81, D83, and S85. Residue P172 coordinates substrate. N-linked (GlcNAc...) asparagine glycosylation occurs at N191. Residue H202 participates in heme b binding. T203 provides a ligand contact to Ca(2+). Residues N218 and N249 are each glycosylated (N-linked (GlcNAc...) asparagine). Ca(2+) is bound by residues D254, S257, and D262.

It belongs to the peroxidase family. Classical plant (class III) peroxidase subfamily. Requires heme b as cofactor. Ca(2+) is required as a cofactor.

It is found in the secreted. The catalysed reaction is 2 a phenolic donor + H2O2 = 2 a phenolic radical donor + 2 H2O. In terms of biological role, removal of H(2)O(2), oxidation of toxic reductants, biosynthesis and degradation of lignin, suberization, auxin catabolism, response to environmental stresses such as wounding, pathogen attack and oxidative stress. These functions might be dependent on each isozyme/isoform in each plant tissue. The protein is Peroxidase 14 (PER14) of Arabidopsis thaliana (Mouse-ear cress).